We begin with the raw amino-acid sequence, 1070 residues long: Protocadherin-8 (1070 aa).

The first 29 residues, 1–29, serve as a signal peptide directing secretion; sequence MSPAKRWGSPCLFPLQLFSLCWVLSVAQS. 6 Cadherin domains span residues 30–135, 136–245, 247–354, 393–497, 498–609, and 615–721; these read KTVR…APRF, PRAQ…SPAF, QGAV…APEI, QEAG…APIF, TKPV…SPIL, and ANGS…VPAS. Over 30–747 the chain is Extracellular; that stretch reads KTVRYSTFEE…SGPSLQWDTP (718 aa). N616 carries N-linked (GlcNAc...) asparagine glycosylation. Residues 716 to 725 are compositionally biased toward low complexity; that stretch reads SAVPASSGSP. Residues 716-740 are disordered; sequence SAVPASSGSPEHSRPPGSRLAPSGP. Residues 748 to 768 traverse the membrane as a helical segment; that stretch reads LIVIIVLAGSCTLLLAAIIAI. At 769–1070 the chain is on the cytoplasmic side; that stretch reads ATTCNRRKKE…SPKKGINENV (302 aa). 3 disordered regions span residues 777 to 859, 906 to 928, and 1046 to 1070; these read KEVR…TGES, REAE…DSDS, and IGVP…NENV. 2 stretches are compositionally biased toward basic and acidic residues: residues 780 to 790 and 906 to 921; these read RKGGALREERP and REAE…KGDS. At S1053 the chain carries Phosphoserine.

As to quaternary structure, the N-terminal extracellular domain forms homophilic interactions; these interactions activate p38 MAPK via TAOK2 and trigger endocytosis. Interacts with CDH2; this interaction may lead to CDH2 cointernalization. Interacts with CDH11. Interacts with TAOK2.

It is found in the cell membrane. The protein localises to the cell projection. It localises to the dendrite. Its subcellular location is the presynaptic cell membrane. The protein resides in the postsynaptic cell membrane. In terms of biological role, calcium-dependent cell-adhesion protein. May play a role in activity-induced synaptic reorganization underlying long term memory. Could be involved in CDH2 internalization through TAOK2/p38 MAPK pathway. In hippocampal neurons, may play a role in the down-regulation of dendritic spines, maybe through its action on CDH2 endocytosis. This chain is Protocadherin-8 (Pcdh8), found in Mus musculus (Mouse).